Reading from the N-terminus, the 237-residue chain is Probable Bax inhibitor 1 (237 aa).

Topologically, residues 1-29 (MNVFDRNINFDSLFKFSQISHSTQVHLKN) are cytoplasmic. The helical transmembrane segment at 30–50 (VYSSLAVCMFVAAAGSYVHVV) threads the bilayer. The Lumenal segment spans residues 51–52 (TR). Residues 53–73 (LFQGGMLSVLGSLGMMFWLAM) form a helical membrane-spanning segment. Topologically, residues 74–86 (TPHNSETEKKRLA) are cytoplasmic. Residues 87–107 (ILAGFAFLTGVGLCPTLDFVI) form a helical membrane-spanning segment. Topologically, residues 108–112 (AINPS) are lumenal. Residues 113-133 (IIVTAFLGTSVIFVCFTLSAL) traverse the membrane as a helical segment. Over 134 to 139 (YAKRRS) the chain is Cytoplasmic. The chain crosses the membrane as a helical span at residues 140 to 160 (YLFLGGTLMSGLSILFLMSMM). The Lumenal segment spans residues 161 to 166 (NMFFGS). Residues 167 to 187 (VMLFKAHMYLGLLIMCGFVLX) form a helical membrane-spanning segment. Over 188 to 206 (DTQLIIEKAENGDKDYVWH) the chain is Cytoplasmic. An intramembrane region (helical) is located at residues 207 to 227 (SVDLFLDFITIFRKLMVILAL). The Cytoplasmic segment spans residues 228–237 (NDKDKKKEKK).

It belongs to the BI1 family. As to expression, highly abundant in testis.

It localises to the endoplasmic reticulum membrane. In terms of biological role, suppressor of apoptosis. Modulates unfolded protein response signaling. Modulate ER calcium homeostasis by acting as a calcium-leak channel. This chain is Probable Bax inhibitor 1 (tmbim6), found in Paralichthys olivaceus (Bastard halibut).